We begin with the raw amino-acid sequence, 259 residues long: Small ribosomal subunit protein uS2 (259 aa).

The segment at Gly-224–Asp-259 is disordered. Over residues Asp-238–Leu-248 the composition is skewed to acidic residues. Residues Asp-250–Asp-259 show a composition bias toward polar residues.

Belongs to the universal ribosomal protein uS2 family.

This Limosilactobacillus fermentum (strain NBRC 3956 / LMG 18251) (Lactobacillus fermentum) protein is Small ribosomal subunit protein uS2.